We begin with the raw amino-acid sequence, 431 residues long: Cyclic GMP-AMP synthase-like receptor (431 aa).

ATP contacts are provided by residues Ser-73 and 85 to 87; that span reads EFD. The Mg(2+) site is built by Glu-85, Asp-87, and Asp-212. Asp-212 contacts GTP. ATP contacts are provided by residues Lys-290 and 304–308; that span reads SYALK. A Mn(2+)-binding site is contributed by Glu-316.

The protein belongs to the mab-21 family. The cofactor is Mg(2+). Mn(2+) serves as cofactor.

The catalysed reaction is GTP + ATP = 2',3'-cGAMP + 2 diphosphate. It catalyses the reaction GTP + ATP = pppGp(2'-5')A + diphosphate. The enzyme catalyses pppGp(2'-5')A = 2',3'-cGAMP + diphosphate. In terms of biological role, nucleotidyltransferase that catalyzes the formation of cyclic GMP-AMP (2',3'-cGAMP) from ATP and GTP and plays a key role in innate immunity. Acts as a key sensor of double-stranded RNA (dsRNA), the presence of dsRNA in the cytoplasm being a danger signal that triggers the immune responses. Directly binds dsRNA, activating the nucleotidyltransferase activity, leading to synthesis of 2',3'-cGAMP, a second messenger that binds to and activates Sting, thereby triggering the immune response via activation of the NF-kappa-B transcription factor. The polypeptide is Cyclic GMP-AMP synthase-like receptor (Frankliniella occidentalis (Western flower thrips)).